The chain runs to 430 residues: 3-phosphoshikimate 1-carboxyvinyltransferase (430 aa).

The 3-phosphoshikimate site is built by Lys23, Ser24, and Arg28. Residue Lys23 coordinates phosphoenolpyruvate. Residues Gly95 and Arg123 each coordinate phosphoenolpyruvate. 3-phosphoshikimate-binding residues include Ser169, Gln171, Asp315, and Lys342. Gln171 contributes to the phosphoenolpyruvate binding site. The active-site Proton acceptor is the Asp315. Phosphoenolpyruvate contacts are provided by Arg346 and Arg388.

This sequence belongs to the EPSP synthase family. As to quaternary structure, monomer.

The protein localises to the cytoplasm. It catalyses the reaction 3-phosphoshikimate + phosphoenolpyruvate = 5-O-(1-carboxyvinyl)-3-phosphoshikimate + phosphate. It functions in the pathway metabolic intermediate biosynthesis; chorismate biosynthesis; chorismate from D-erythrose 4-phosphate and phosphoenolpyruvate: step 6/7. Catalyzes the transfer of the enolpyruvyl moiety of phosphoenolpyruvate (PEP) to the 5-hydroxyl of shikimate-3-phosphate (S3P) to produce enolpyruvyl shikimate-3-phosphate and inorganic phosphate. The polypeptide is 3-phosphoshikimate 1-carboxyvinyltransferase (Streptococcus pyogenes serotype M1).